Consider the following 214-residue polypeptide: Transcriptional regulatory protein ComA (214 aa).

Positions 3–121 (KILVIDDHPA…KITQYIYHVL (119 aa)) constitute a Response regulatory domain. A 4-aspartylphosphate modification is found at D55. The 66-residue stretch at 147 to 212 (SQKEQDVLTP…EAVLIAKSDG (66 aa)) folds into the HTH luxR-type domain. Positions 171 to 190 (NQEIADALHLSKRSIEYSLT) form a DNA-binding region, H-T-H motif.

In terms of processing, phosphorylated by ComP.

The protein resides in the cytoplasm. In terms of biological role, response regulator in the two-component regulatory system ComP/ComA involved in a major quorum response pathway that regulates the development of genetic competence. Regulates directly the expression of over 20 genes, including genes of the srfA operon, degQ, rapA, rapC, rapE, rapF, etc. Regulates indirectly, through the regulation of comK transcription, the expression of late competence genes. This Bacillus subtilis (strain 168) protein is Transcriptional regulatory protein ComA (comA).